Consider the following 377-residue polypeptide: UPF0754 membrane protein BPUM_0927 (377 aa).

The next 2 membrane-spanning stretches (helical) occupy residues 1–21 (MNIF…GAAT) and 357–377 (FLGG…VTLF).

Belongs to the UPF0754 family.

The protein resides in the cell membrane. This is UPF0754 membrane protein BPUM_0927 from Bacillus pumilus (strain SAFR-032).